The chain runs to 73 residues: MQYKTFLVIFLAYLLVTEEALAFWGALAKGALKLIPSLVSSFTKKDKRALKNIFDPYQKNLDLELERLLSQLQ.

An N-terminal signal peptide occupies residues 1–22 (MQYKTFLVIFLAYLLVTEEALA). Positions 47-73 (KRALKNIFDPYQKNLDLELERLLSQLQ) are excised as a propeptide.

Belongs to the non-disulfide-bridged peptide (NDBP) superfamily. Medium-length antimicrobial peptide (group 3) family. In terms of tissue distribution, expressed by the venom gland.

Its subcellular location is the secreted. The protein resides in the target cell membrane. Amphipathic peptide with potent activities against Gram-positive bacteria (MIC=5.6-30.0 uM) and weaker activities against the tested Gram-negative bacteria (MIC=15 uM to &gt;45 uM). It has high hemolytic activity against human erythrocytes. May act by disrupting the integrity of the bacterial cell membrane. The polypeptide is Heterin-2 (Heterometrus spinifer (Asia giant forest scorpion)).